We begin with the raw amino-acid sequence, 196 residues long: DnaA initiator-associating protein DiaA (196 aa).

Residues 34 to 196 (LVQSLLNGNK…DNTLFPHQDD (163 aa)) form the SIS domain.

This sequence belongs to the SIS family. DiaA subfamily. Homotetramer; dimer of dimers.

Required for the timely initiation of chromosomal replication via direct interactions with the DnaA initiator protein. This Shigella flexneri serotype 5b (strain 8401) protein is DnaA initiator-associating protein DiaA.